Reading from the N-terminus, the 340-residue chain is Glyceraldehyde-3-phosphate dehydrogenase (340 aa).

NAD(+) contacts are provided by residues 12–13 (RI), aspartate 40, lysine 85, and serine 128. D-glyceraldehyde 3-phosphate-binding positions include 158–160 (SCT), threonine 189, arginine 204, 217–218 (TG), and arginine 240. The Nucleophile role is filled by cysteine 159. Residue lysine 257 forms an Isoglutamyl lysine isopeptide (Lys-Gln) (interchain with Q-Cter in protein Pup) linkage. NAD(+) is bound at residue asparagine 321.

This sequence belongs to the glyceraldehyde-3-phosphate dehydrogenase family. In terms of assembly, homotetramer.

The protein resides in the cytoplasm. It carries out the reaction D-glyceraldehyde 3-phosphate + phosphate + NAD(+) = (2R)-3-phospho-glyceroyl phosphate + NADH + H(+). The protein operates within carbohydrate degradation; glycolysis; pyruvate from D-glyceraldehyde 3-phosphate: step 1/5. Its function is as follows. Catalyzes the oxidative phosphorylation of glyceraldehyde 3-phosphate (G3P) to 1,3-bisphosphoglycerate (BPG) using the cofactor NAD. The first reaction step involves the formation of a hemiacetal intermediate between G3P and a cysteine residue, and this hemiacetal intermediate is then oxidized to a thioester, with concomitant reduction of NAD to NADH. The reduced NADH is then exchanged with the second NAD, and the thioester is attacked by a nucleophilic inorganic phosphate to produce BPG. In Mycolicibacterium smegmatis (strain ATCC 700084 / mc(2)155) (Mycobacterium smegmatis), this protein is Glyceraldehyde-3-phosphate dehydrogenase (gapA).